The sequence spans 533 residues: Acetone monooxygenase (methyl acetate-forming) (533 aa).

Residues 43–46 (TWYW), 55–56 (DS), and tyrosine 61 each bind FAD. An NADP(+)-binding site is contributed by 53 to 55 (RFD). NADP(+) is bound by residues 183 to 189 (NGATGIQ), 206 to 207 (RT), and tryptophan 492.

It belongs to the FAD-binding monooxygenase family. In terms of assembly, homotetramer. FAD is required as a cofactor.

The enzyme catalyses acetone + NADPH + O2 + H(+) = methyl acetate + NADP(+) + H2O. Functionally, plays an important role in the metabolism of acetone derived from propane oxidation. Catalyzes the oxidation of acetone to methyl acetate. Exhibits high catalytic efficiency towards various linear and cyclic ketones, such as butanone, 2-pentanone, 2-heptanone, 2-octanone, 2-nonanone, 2-decanone, cyclobutanone, cyclopentanone and cyclohexanone. Elicits the highest catalytic efficiency towards butanone and cyclobutanone. Is highly specific for NADPH and cannot use NADH. The chain is Acetone monooxygenase (methyl acetate-forming) from Gordonia sp. (strain TY-5).